A 589-amino-acid polypeptide reads, in one-letter code: Probable translation initiation factor IF-2 (589 aa).

Positions 3–224 (VRSPFVVVMG…AGVSQRFIPR (222 aa)) constitute a tr-type G domain. Residues 12-19 (GHVDVGKT) are G1. Residue 12 to 19 (GHVDVGKT) participates in GTP binding. Residues 37–41 (MITQH) form a G2 region. A G3 region spans residues 78–81 (DTPG). GTP is bound by residues 78–82 (DTPGH) and 132–135 (NKLD). Positions 132–135 (NKLD) are G4. The G5 stretch occupies residues 200 to 202 (SAV).

Belongs to the TRAFAC class translation factor GTPase superfamily. Classic translation factor GTPase family. IF-2 subfamily.

In terms of biological role, function in general translation initiation by promoting the binding of the formylmethionine-tRNA to ribosomes. Seems to function along with eIF-2. The polypeptide is Probable translation initiation factor IF-2 (Pyrobaculum neutrophilum (strain DSM 2338 / JCM 9278 / NBRC 100436 / V24Sta) (Thermoproteus neutrophilus)).